We begin with the raw amino-acid sequence, 996 residues long: Sarcoplasmic/endoplasmic reticulum calcium ATPase 1 (996 aa).

Over 1–48 the chain is Cytoplasmic; it reads MENAHTKSPAECLSYFGVNEHTGLSPDQFKKNLDKFGYNELPAEEGKS. A helical membrane pass occupies residues 49–69; the sequence is IWDLIVEQFEDLLVRILLLAA. The Lumenal portion of the chain corresponds to 70 to 89; the sequence is CISFVLAWFEEGEETITAFV. Residues 90–110 traverse the membrane as a helical segment; sequence EPFVILLILIANAIVGVWQER. Over 111-253 the chain is Cytoplasmic; the sequence is NAEDAIEALK…QEKTPLQAKL (143 aa). The helical transmembrane segment at 254–273 threads the bilayer; the sequence is DEFGEQLSKVISLICVAVWA. Residues 274–295 are Lumenal-facing; the sequence is INIGHFNDPVHGGSWIRGAVYY. A helical membrane pass occupies residues 296–313; the sequence is FKIAVALAVAAIPEGLPA. Val-304, Ala-305, Ile-307, and Glu-309 together coordinate Ca(2+). Over 314 to 754 the chain is Cytoplasmic; it reads VITTCLALGT…EEGRAIYNNM (441 aa). The active-site 4-aspartylphosphate intermediate is Asp-351. Mg(2+) is bound by residues Asp-351 and Thr-353. Residues Thr-353, Glu-442, Arg-489, Lys-512, Arg-557, Thr-622, Gly-623, Asp-624, Arg-675, and Lys-681 each contribute to the ATP site. Asp-700 contributes to the Mg(2+) binding site. Asn-703 serves as a coordination point for ATP. The chain crosses the membrane as a helical span at residues 755–774; sequence KQFIRYLISSNVGEVVCIFL. Ca(2+)-binding residues include Asn-765 and Glu-768. The Lumenal portion of the chain corresponds to 775–784; that stretch reads TAALGLPEAL. Residues 785-805 traverse the membrane as a helical segment; the sequence is IPVQLLWVNLVTDGLPATALG. Residues 785-805 are interaction with PLN; the sequence is IPVQLLWVNLVTDGLPATALG. Positions 793, 796, and 797 each coordinate Ca(2+). Residues 806-825 lie on the Cytoplasmic side of the membrane; that stretch reads FNPPDLDIMGKPPRSPKEPL. Residues 826–848 traverse the membrane as a helical segment; it reads ISGWLFFRYMAIGGYVGAATVGG. Over 849–894 the chain is Lumenal; sequence AAWWFLYDSTGPAVTYYQLSHFMQCHNHNEDFTGVDCDIFEASPPM. Cys-873 and Cys-885 are oxidised to a cystine. The chain crosses the membrane as a helical span at residues 895–914; the sequence is TMALSVLVTIEMCNALNSLS. Glu-905 provides a ligand contact to Ca(2+). Topologically, residues 915-927 are cytoplasmic; the sequence is ENQSLIRMPPWSN. A helical transmembrane segment spans residues 928-946; sequence LWLMAAMTLSMSLHFMIIY. An interaction with PLN region spans residues 929 to 940; the sequence is WLMAAMTLSMSL. Over 947-961 the chain is Lumenal; it reads VDPLPMIFKLTHLTF. A helical transmembrane segment spans residues 962–982; that stretch reads DQWLMVFKLSFPVILIDEVLK. The Cytoplasmic segment spans residues 983-996; it reads FFARNYIETGKEVK.

The protein belongs to the cation transport ATPase (P-type) (TC 3.A.3) family. Type IIA subfamily. In terms of assembly, interacts with sarcolipin (SLN). Interacts with phospholamban (PLN). Interacts with myoregulin (MRLN). Interacts with DWORF. It depends on Mg(2+) as a cofactor.

Its subcellular location is the endoplasmic reticulum membrane. The protein resides in the sarcoplasmic reticulum membrane. The enzyme catalyses Ca(2+)(in) + ATP + H2O = Ca(2+)(out) + ADP + phosphate + H(+). Inhibited by sarcolipin (SLN) and myoregulin (MRLN). Also shown to be inhibited by phospholamban (PLN) in vitro. Enhanced by DWORF; DWORF increases activity by displacing sarcolipin (SLN), phospholamban (PLN) and myoregulin (MRLN). In terms of biological role, key regulator of striated muscle performance by acting as the major Ca(2+) ATPase responsible for the reuptake of cytosolic Ca(2+) into the sarcoplasmic reticulum. Catalyzes the hydrolysis of ATP coupled with the translocation of calcium from the cytosol to the sarcoplasmic reticulum lumen. Contributes to calcium sequestration involved in muscular excitation/contraction. In Makaira nigricans (Atlantic blue marlin), this protein is Sarcoplasmic/endoplasmic reticulum calcium ATPase 1 (atp2a1).